A 215-amino-acid chain; its full sequence is Ribose-5-phosphate isomerase A (215 aa).

Substrate-binding positions include 26 to 29, 79 to 82, and 92 to 95; these read TGST, DGAD, and KGGG. Residue E101 is the Proton acceptor of the active site. K119 contributes to the substrate binding site.

It belongs to the ribose 5-phosphate isomerase family. In terms of assembly, homodimer.

It carries out the reaction aldehydo-D-ribose 5-phosphate = D-ribulose 5-phosphate. The protein operates within carbohydrate degradation; pentose phosphate pathway; D-ribose 5-phosphate from D-ribulose 5-phosphate (non-oxidative stage): step 1/1. Catalyzes the reversible conversion of ribose-5-phosphate to ribulose 5-phosphate. In Xanthomonas oryzae pv. oryzae (strain PXO99A), this protein is Ribose-5-phosphate isomerase A.